Here is a 910-residue protein sequence, read N- to C-terminus: MFSILKKIFGTANDRTIKKLFSDIAKINSLEPAIQKLSDEELKNKTVEFKKKLKNGATLDDIAYEAFAVVREASRRVYGMRHFDVQLIGGLVLHRGMITEMRTGEGKTLVATLPAYLNALAEKGVYVVTVNDYLVSRDSASMGKIYNFLGLSVGCIVAGMTDEAKREAYNSDITYATNNELGFDYLRDNMKYSLQERVLRPFNFAIIDEVDSILIDEARTPLVISGPVNDNSELYGKVDKLVRMLNVSDFEKDEKLKTINLTESGISHVESLLSQADIIKPNSGLYDFENLSLVHYVNQALRAHNMFMIDVDYLVRDGKVMIIDEFTGRVMEGRRYSEGLHQALEAKENVKIQNENQTLASITFQNYFRNYPKLSGMTGTAMTEAPELKDIYNLDVVAVPTHNKVTRRDLDDEIYGSKKEKYDAILKLIKDCYDRGQPVLVGTVSIEKSEEISNVLNKNKIPHKVLNAKFHEQEAFIIAQAGRFKAVTIATNMAGRGTDIMLGGNPEMLIEQIDRKSLTNAAYKEKVNEIKAQTAEEKKQVIAAGGLFVIGTERHESRRIDNQLRGRSGRQGDPGNTKFFLSLDDDLMRIFASERISGVLRTLGLKDGEAIHHPMISRSLEKAQQKVEGHNYEIRKNLLRFDDVMNDQRKIIYEQRTEIIKSKDSYDFLSSTTEELAKKIVLTFMPAGSYREDWDIENLSVELHRTFAIKLDQNLISKNDVTEEEVTKIVIQTADSIYKSKEEAYSPDLMHNAVKYILLTTLDQVWKDHLHSLDHLRQGISLRAYAQKDPLSEYKREAFNLFEHMLNNLKELFIQTVYHFHIDLKHIQKEDISLENKKLQNNMHESREDPAFSKYNAGSNLETDLRPVISRINPEDRDPKNPTSWGKVSRNELCPCGSGKKYKYCHGLNE.

Residues glutamine 86, 104–108, and aspartate 499 each bind ATP; that span reads GEGKT. Residues cysteine 894, cysteine 896, cysteine 905, and histidine 906 each contribute to the Zn(2+) site.

It belongs to the SecA family. Monomer and homodimer. Part of the essential Sec protein translocation apparatus which comprises SecA, SecYEG and auxiliary proteins SecDF-YajC and YidC. It depends on Zn(2+) as a cofactor.

The protein resides in the cell inner membrane. Its subcellular location is the cytoplasm. It carries out the reaction ATP + H2O + cellular proteinSide 1 = ADP + phosphate + cellular proteinSide 2.. In terms of biological role, part of the Sec protein translocase complex. Interacts with the SecYEG preprotein conducting channel. Has a central role in coupling the hydrolysis of ATP to the transfer of proteins into and across the cell membrane, serving both as a receptor for the preprotein-SecB complex and as an ATP-driven molecular motor driving the stepwise translocation of polypeptide chains across the membrane. This is Protein translocase subunit SecA from Rickettsia bellii (strain OSU 85-389).